A 234-amino-acid polypeptide reads, in one-letter code: Probable transcriptional regulatory protein TcrX (234 aa).

The Response regulatory domain occupies 10–124 (TVLVVDDEPV…EVVLRLRALL (115 aa)). Aspartate 59 is subject to 4-aspartylphosphate. Positions 135–232 (GAQLVVGDLV…LRGAGYVLKP (98 aa)) form a DNA-binding region, ompR/PhoB-type.

Post-translationally, phosphorylated by TcrY.

It localises to the cytoplasm. Member of the two-component regulatory system TcrY/TcrX. This is Probable transcriptional regulatory protein TcrX (tcrX) from Mycobacterium tuberculosis (strain ATCC 25618 / H37Rv).